Here is a 227-residue protein sequence, read N- to C-terminus: MKLAGIDEAGRGPVLGPMVIAAVVVDEGNVPKLEELGVKDSKKLTPKRRERLFDEIVQLLDDYVILELWPEEIDSREGTLNEFEVENFVKALNSLKVKPDVVYIDAADVKEARFGEEIKAKLDFEADIIAEHKADDKFVPVSAASILAKVARDRAIEKLKDQYGEIGSGYPSDPRTRTFLEEYYRKHGEFPPIVRRTWKTLKKIEEKLAKEMKKRRGQTSLEEFFGK.

Residues 1–210 form the RNase H type-2 domain; sequence MKLAGIDEAG…LKKIEEKLAK (210 aa). A divalent metal cation is bound by residues D7, E8, and D105.

It belongs to the RNase HII family. Mn(2+) serves as cofactor. The cofactor is Mg(2+).

The protein resides in the cytoplasm. The enzyme catalyses Endonucleolytic cleavage to 5'-phosphomonoester.. Its function is as follows. Endonuclease that specifically degrades the RNA of RNA-DNA hybrids. The polypeptide is Ribonuclease HII (Thermococcus onnurineus (strain NA1)).